Here is a 510-residue protein sequence, read N- to C-terminus: GTPase Der (510 aa).

2 consecutive EngA-type G domains span residues L3 to A167 and I230 to T405. Residues G9–S16, D56–F60, N119–E122, G236–S243, D283–L287, and S348–D351 contribute to the GTP site. One can recognise a KH-like domain in the interval A406–K490.

The protein belongs to the TRAFAC class TrmE-Era-EngA-EngB-Septin-like GTPase superfamily. EngA (Der) GTPase family. As to quaternary structure, associates with the 50S ribosomal subunit.

Its function is as follows. GTPase that plays an essential role in the late steps of ribosome biogenesis. The chain is GTPase Der from Hyphomonas neptunium (strain ATCC 15444).